The sequence spans 556 residues: MSVSAFNRRWAAVILEALTRHGVRHVCIAPGSRSTPLTLAAAENPAFIHHTHFDERGLGHLALGLAKVSQQPVAVIVTSGTAVANLYPALIEAGLTGEKLILLTADRPPELIDCGANQAIRQAGMFASHPSQTLSLPRPTQDIPARWLVSTIDNALAMLHAGALHINCPFAEPLYGDMNDTGLVWQQRLGDWWQDEKPWLREARRLASDKQRDWFFWRQKRGVVVAGRMSAEEGKKVAQWAQTLGWPLIGDVLSQTGQPLPCADLWLGNAKAVTELQQAQIVVQLGSSLTGKRLLQWQATCEPEEYWVIDNIEGRLDPAHHRGRRLVAKIADWLELHPAEKRKPWCVGIPRLAELAWQRVVAQRDTFGEAQLAHRIRDYLPEQGQLFVGNSLVVRLIDALSQLPAGYPVYSNRGASGIDGLLSTAAGVQRASAKSTLAIVGDLSALYDLNALALLRQVSAPFVLIVVNNNGGQIFSLLPTPQSKRERFYLMPQNVHFDHAAAMFNLRYHRPENWEELESALAGAWRTPATTVIELVVNDTDGAQTLQQLLAQVSHL.

It belongs to the TPP enzyme family. MenD subfamily. Homodimer. The cofactor is Mg(2+). Mn(2+) is required as a cofactor. It depends on thiamine diphosphate as a cofactor.

It catalyses the reaction isochorismate + 2-oxoglutarate + H(+) = 5-enolpyruvoyl-6-hydroxy-2-succinyl-cyclohex-3-ene-1-carboxylate + CO2. Its pathway is quinol/quinone metabolism; 1,4-dihydroxy-2-naphthoate biosynthesis; 1,4-dihydroxy-2-naphthoate from chorismate: step 2/7. It participates in quinol/quinone metabolism; menaquinone biosynthesis. Functionally, catalyzes the thiamine diphosphate-dependent decarboxylation of 2-oxoglutarate and the subsequent addition of the resulting succinic semialdehyde-thiamine pyrophosphate anion to isochorismate to yield 2-succinyl-5-enolpyruvyl-6-hydroxy-3-cyclohexene-1-carboxylate (SEPHCHC). This Salmonella paratyphi A (strain AKU_12601) protein is 2-succinyl-5-enolpyruvyl-6-hydroxy-3-cyclohexene-1-carboxylate synthase.